The chain runs to 662 residues: Bifunctional polymyxin resistance protein ArnA (662 aa).

The segment at 1–307 (MTSKAVVFAY…ELGLVEGARL (307 aa)) is formyltransferase ArnAFT. H106 (proton donor; for formyltransferase activity) is an active-site residue. (6R)-10-formyltetrahydrofolate-binding positions include R116 and 138–142 (IERAD). The interval 316 to 662 (RRTRVLILGV…EALREREAQA (347 aa)) is dehydrogenase ArnADH. NAD(+) is bound by residues D349 and 370–371 (DI). Residues A395, Y400, and 434–435 (TS) contribute to the UDP-alpha-D-glucuronate site. The active-site Proton acceptor; for decarboxylase activity is E436. Residues R462, N493, 527–536 (RLVDGGAQKR), and Y614 each bind UDP-alpha-D-glucuronate. R620 functions as the Proton donor; for decarboxylase activity in the catalytic mechanism.

This sequence in the N-terminal section; belongs to the Fmt family. UDP-L-Ara4N formyltransferase subfamily. It in the C-terminal section; belongs to the NAD(P)-dependent epimerase/dehydratase family. UDP-glucuronic acid decarboxylase subfamily. Homohexamer, formed by a dimer of trimers.

It catalyses the reaction UDP-alpha-D-glucuronate + NAD(+) = UDP-beta-L-threo-pentopyranos-4-ulose + CO2 + NADH. It carries out the reaction UDP-4-amino-4-deoxy-beta-L-arabinose + (6R)-10-formyltetrahydrofolate = UDP-4-deoxy-4-formamido-beta-L-arabinose + (6S)-5,6,7,8-tetrahydrofolate + H(+). It participates in nucleotide-sugar biosynthesis; UDP-4-deoxy-4-formamido-beta-L-arabinose biosynthesis; UDP-4-deoxy-4-formamido-beta-L-arabinose from UDP-alpha-D-glucuronate: step 1/3. It functions in the pathway nucleotide-sugar biosynthesis; UDP-4-deoxy-4-formamido-beta-L-arabinose biosynthesis; UDP-4-deoxy-4-formamido-beta-L-arabinose from UDP-alpha-D-glucuronate: step 3/3. Its pathway is bacterial outer membrane biogenesis; lipopolysaccharide biosynthesis. Functionally, bifunctional enzyme that catalyzes the oxidative decarboxylation of UDP-glucuronic acid (UDP-GlcUA) to UDP-4-keto-arabinose (UDP-Ara4O) and the addition of a formyl group to UDP-4-amino-4-deoxy-L-arabinose (UDP-L-Ara4N) to form UDP-L-4-formamido-arabinose (UDP-L-Ara4FN). The modified arabinose is attached to lipid A and is required for resistance to polymyxin and cationic antimicrobial peptides. The protein is Bifunctional polymyxin resistance protein ArnA of Pseudomonas aeruginosa (strain UCBPP-PA14).